Reading from the N-terminus, the 251-residue chain is MSGHNKWSKIKYVKAKEDAKKGKVFARFAHEIMLAAKSGGGDPDLNPRLRAAIDGAKAVSTPKENIERAIKKGTGELGGATIQEITYEGYGPSGTAFLIEVATDNTNRSASELRTLFTKNGGSIGTPGSVAYQFERKGEARIMAEGLTEDSAMDLALECGADDVEQGDSDNEWVFVTSPTELNNVCAALREAGHTVISMKLISVAQNASVINDLETAKAALRLYEALDDYDDALNVFSNFDVAEEILEQLG.

This sequence belongs to the TACO1 family.

The protein localises to the cytoplasm. The polypeptide is Probable transcriptional regulatory protein Amuc_0709 (Akkermansia muciniphila (strain ATCC BAA-835 / DSM 22959 / JCM 33894 / BCRC 81048 / CCUG 64013 / CIP 107961 / Muc)).